The primary structure comprises 523 residues: Solute carrier family 35 member F5 (523 aa).

The next 2 membrane-spanning stretches (helical) occupy residues 69–89 (MALGIVILLLVDVIWVASSEL) and 101–121 (FFSTFAKTSMFVLYLLGFIIW). Position 207 is a phosphoserine (Ser-207). 8 helical membrane-spanning segments follow: residues 243-263 (ISFFFCFVWFLANLSYQEALS), 268-288 (AIVNILSSTSGLFTLILAAVF), 296-316 (FTLSKLLAVILSIGGVVLVNL), 327-347 (TIGSIWSLAGAMLYAVYIVMI), 361-381 (MFFGFVGLFNLLLLWPGFFLL), 395-415 (VVLMCIIINGLIGTVLSEFLW), 420-440 (FLTSSLIGTLALSLTIPLSII), and 452-472 (WLFFAGAIPVFFSFFIVTLLC). Positions 252-316 (FLANLSYQEA…SIGGVVLVNL (65 aa)) constitute an EamA domain.

Belongs to the SLC35F solute transporter family.

The protein localises to the membrane. Functionally, putative solute transporter. This Pongo abelii (Sumatran orangutan) protein is Solute carrier family 35 member F5 (SLC35F5).